The following is a 360-amino-acid chain: Histidinol-phosphate aminotransferase (360 aa).

Lys-222 bears the N6-(pyridoxal phosphate)lysine mark.

The protein belongs to the class-II pyridoxal-phosphate-dependent aminotransferase family. Histidinol-phosphate aminotransferase subfamily. In terms of assembly, homodimer. The cofactor is pyridoxal 5'-phosphate.

The enzyme catalyses L-histidinol phosphate + 2-oxoglutarate = 3-(imidazol-4-yl)-2-oxopropyl phosphate + L-glutamate. It functions in the pathway amino-acid biosynthesis; L-histidine biosynthesis; L-histidine from 5-phospho-alpha-D-ribose 1-diphosphate: step 7/9. The sequence is that of Histidinol-phosphate aminotransferase from Listeria welshimeri serovar 6b (strain ATCC 35897 / DSM 20650 / CCUG 15529 / CIP 8149 / NCTC 11857 / SLCC 5334 / V8).